Here is a 435-residue protein sequence, read N- to C-terminus: Casein kinase 1-like protein 12 (435 aa).

Residues 9–278 (YRLGRKIGSG…LKRIFRDLFI (270 aa)) enclose the Protein kinase domain. ATP is bound by residues 15-23 (IGSGSFGEI) and K38. D128 serves as the catalytic Proton acceptor. Disordered regions lie at residues 313-363 (VGTS…RGPM) and 394-414 (LRNS…TRKH).

This sequence belongs to the protein kinase superfamily. CK1 Ser/Thr protein kinase family. Casein kinase I subfamily. In terms of assembly, monomer. Autophosphorylated.

The protein resides in the cytoplasm. The enzyme catalyses L-seryl-[protein] + ATP = O-phospho-L-seryl-[protein] + ADP + H(+). The catalysed reaction is L-threonyl-[protein] + ATP = O-phospho-L-threonyl-[protein] + ADP + H(+). Functionally, casein kinases are operationally defined by their preferential utilization of acidic proteins such as caseins as substrates. It can phosphorylate a large number of proteins. This chain is Casein kinase 1-like protein 12, found in Arabidopsis thaliana (Mouse-ear cress).